The following is a 189-amino-acid chain: UPF0301 protein PP_4995 (189 aa).

This sequence belongs to the UPF0301 (AlgH) family.

This Pseudomonas putida (strain ATCC 47054 / DSM 6125 / CFBP 8728 / NCIMB 11950 / KT2440) protein is UPF0301 protein PP_4995.